A 268-amino-acid polypeptide reads, in one-letter code: NH(3)-dependent NAD(+) synthetase (268 aa).

An ATP-binding site is contributed by 46–53 (GISGGQDS). Asp52 lines the Mg(2+) pocket. Deamido-NAD(+) is bound at residue Arg140. Thr160 is an ATP binding site. Mg(2+) is bound at residue Glu165. The deamido-NAD(+) site is built by Lys173 and Asp180. Lys189 and Thr211 together coordinate ATP. 260–261 (HK) is a deamido-NAD(+) binding site.

The protein belongs to the NAD synthetase family. As to quaternary structure, homodimer.

The catalysed reaction is deamido-NAD(+) + NH4(+) + ATP = AMP + diphosphate + NAD(+) + H(+). It functions in the pathway cofactor biosynthesis; NAD(+) biosynthesis; NAD(+) from deamido-NAD(+) (ammonia route): step 1/1. Catalyzes the ATP-dependent amidation of deamido-NAD to form NAD. Uses ammonia as a nitrogen source. This is NH(3)-dependent NAD(+) synthetase from Buchnera aphidicola subsp. Schizaphis graminum (strain Sg).